Here is a 283-residue protein sequence, read N- to C-terminus: Protein/nucleic acid deglycase HchA (283 aa).

Positions 86, 91, and 123 each coordinate Zn(2+). Cys-185 acts as the Nucleophile in catalysis.

It belongs to the peptidase C56 family. HchA subfamily. In terms of assembly, homodimer.

It localises to the cytoplasm. The catalysed reaction is N(omega)-(1-hydroxy-2-oxopropyl)-L-arginyl-[protein] + H2O = lactate + L-arginyl-[protein] + H(+). The enzyme catalyses N(6)-(1-hydroxy-2-oxopropyl)-L-lysyl-[protein] + H2O = lactate + L-lysyl-[protein] + H(+). It carries out the reaction S-(1-hydroxy-2-oxopropyl)-L-cysteinyl-[protein] + H2O = lactate + L-cysteinyl-[protein] + H(+). It catalyses the reaction N(omega)-(1-hydroxy-2-oxoethyl)-L-arginyl-[protein] + H2O = L-arginyl-[protein] + glycolate + H(+). The catalysed reaction is N(6)-(1-hydroxy-2-oxoethyl)-L-lysyl-[protein] + H2O = glycolate + L-lysyl-[protein] + H(+). The enzyme catalyses S-(1-hydroxy-2-oxoethyl)-L-cysteinyl-[protein] + H2O = glycolate + L-cysteinyl-[protein] + H(+). It carries out the reaction N(2)-(1-hydroxy-2-oxopropyl)-dGTP + H2O = lactate + dGTP + H(+). It catalyses the reaction N(2)-(1-hydroxy-2-oxopropyl)-GTP + H2O = lactate + GTP + H(+). The catalysed reaction is N(2)-(1-hydroxy-2-oxopropyl)-GDP + H2O = lactate + GDP + H(+). The enzyme catalyses N(2)-(1-hydroxy-2-oxopropyl)-GMP + H2O = lactate + GMP + H(+). It carries out the reaction N(2)-(1-hydroxy-2-oxoethyl)-dGTP + H2O = dGTP + glycolate + H(+). It catalyses the reaction N(2)-(1-hydroxy-2-oxoethyl)-GTP + H2O = glycolate + GTP + H(+). The catalysed reaction is N(2)-(1-hydroxy-2-oxoethyl)-GDP + H2O = glycolate + GDP + H(+). The enzyme catalyses N(2)-(1-hydroxy-2-oxoethyl)-GMP + H2O = glycolate + GMP + H(+). It carries out the reaction an N(2)-(1-hydroxy-2-oxopropyl)-guanosine in RNA + H2O = a guanosine in RNA + lactate + H(+). It catalyses the reaction an N(2)-(1-hydroxy-2-oxopropyl)-2'-deoxyguanosine in DNA + H2O = a 2'-deoxyguanosine in DNA + lactate + H(+). The catalysed reaction is an N(2)-(1-hydroxy-2-oxoethyl)-guanosine in RNA + H2O = a guanosine in RNA + glycolate + H(+). The enzyme catalyses an N(2)-(1-hydroxy-2-oxoethyl)-2'-deoxyguanosine in DNA + H2O = a 2'-deoxyguanosine in DNA + glycolate + H(+). Functionally, protein and nucleotide deglycase that catalyzes the deglycation of the Maillard adducts formed between amino groups of proteins or nucleotides and reactive carbonyl groups of glyoxals. Thus, functions as a protein deglycase that repairs methylglyoxal- and glyoxal-glycated proteins, and releases repaired proteins and lactate or glycolate, respectively. Deglycates cysteine, arginine and lysine residues in proteins, and thus reactivates these proteins by reversing glycation by glyoxals. Acts on early glycation intermediates (hemithioacetals and aminocarbinols), preventing the formation of Schiff bases and advanced glycation endproducts (AGE). Also functions as a nucleotide deglycase able to repair glycated guanine in the free nucleotide pool (GTP, GDP, GMP, dGTP) and in DNA and RNA. Is thus involved in a major nucleotide repair system named guanine glycation repair (GG repair), dedicated to reversing methylglyoxal and glyoxal damage via nucleotide sanitization and direct nucleic acid repair. Plays an important role in protecting cells from carbonyl stress. In Escherichia coli O157:H7, this protein is Protein/nucleic acid deglycase HchA.